The primary structure comprises 501 residues: WD repeat-containing protein wdr-5.3 (501 aa).

Disordered regions lie at residues 1 to 35, 58 to 85, and 155 to 197; these read MNPERQETISPKNVPFQPVPTPNQQSLQSRMLESN, PIGVPQTARPPSNQSPHPNPPGYPYQSH, and KSAE…ITKK. The segment covering 22-35 has biased composition (polar residues); that stretch reads PNQQSLQSRMLESN. The segment covering 167–177 has biased composition (polar residues); it reads SITTKPTSTIQ. WD repeat units follow at residues 211–241, 253–283, 295–325, 337–367, 381–410, 422–455, and 467–499; these read GHTKSVSVIKFSYCGKYLGTGSADKQIKVWN, SHQLGINDFSWSSNSQFIASASDDTTVKIFD, GHTNYVFCCSFNPQSSLIASAGFDETVRVWD, AHSDPITSISYNHDGNTMATSSYDGCIRVWD, DHAPVTFVCFSPNGKYLLSAQLDSSLKLWD, GHKNKKYCLFANMSVPLGKHIISGSEDGRILVWS, and GHTTPVLATDSHPTLNIIASGGLEPDNVIRIWR.

It belongs to the WD repeat WDR5/wds family.

Functionally, not required for methylation of histone H3 'Lys-4'. This Caenorhabditis elegans protein is WD repeat-containing protein wdr-5.3 (wdr-5.3).